The primary structure comprises 143 residues: Transcriptional regulator MraZ (143 aa).

SpoVT-AbrB domains are found at residues 5–47 (EYSH…PQKE) and 76–119 (AAEC…SQEL).

It belongs to the MraZ family. As to quaternary structure, forms oligomers.

It localises to the cytoplasm. Its subcellular location is the nucleoid. This chain is Transcriptional regulator MraZ, found in Carboxydothermus hydrogenoformans (strain ATCC BAA-161 / DSM 6008 / Z-2901).